The chain runs to 161 residues: Large ribosomal subunit protein uL11 (161 aa).

Belongs to the universal ribosomal protein uL11 family. In terms of assembly, part of the ribosomal stalk of the 50S ribosomal subunit. Interacts with L10 and the large rRNA to form the base of the stalk. L10 forms an elongated spine to which L12 dimers bind in a sequential fashion forming a multimeric L10(L12)X complex.

Functionally, forms part of the ribosomal stalk which helps the ribosome interact with GTP-bound translation factors. This chain is Large ribosomal subunit protein uL11, found in Methanosarcina barkeri (strain Fusaro / DSM 804).